The chain runs to 500 residues: Probable cytosol aminopeptidase (500 aa).

The Mn(2+) site is built by K265 and D270. Residue K277 is part of the active site. Positions 288, 347, and 349 each coordinate Mn(2+). Residue R351 is part of the active site.

It belongs to the peptidase M17 family. Requires Mn(2+) as cofactor.

It localises to the cytoplasm. It carries out the reaction Release of an N-terminal amino acid, Xaa-|-Yaa-, in which Xaa is preferably Leu, but may be other amino acids including Pro although not Arg or Lys, and Yaa may be Pro. Amino acid amides and methyl esters are also readily hydrolyzed, but rates on arylamides are exceedingly low.. The catalysed reaction is Release of an N-terminal amino acid, preferentially leucine, but not glutamic or aspartic acids.. In terms of biological role, presumably involved in the processing and regular turnover of intracellular proteins. Catalyzes the removal of unsubstituted N-terminal amino acids from various peptides. This Rickettsia felis (strain ATCC VR-1525 / URRWXCal2) (Rickettsia azadi) protein is Probable cytosol aminopeptidase.